The chain runs to 2792 residues: E3 ubiquitin-protein ligase UBR5 (2792 aa).

The residue at position 2 (Thr-2) is an N-acetylthreonine. Basic and acidic residues predominate over residues 77 to 88 (DRLELGKPDNND). The disordered stretch occupies residues 77-175 (DRLELGKPDN…DRGSGLLGSQ (99 aa)). Residues 94-111 (SSSGTGRTSRPGRTSDSP) show a composition bias toward low complexity. Ser-110 is modified (phosphoserine). Gly residues predominate over residues 135–144 (GVGGSGGGSS). A UBA domain is found at 184 to 226 (VIPEELISQAQVVLQGKSRSVIIRELQRTNLDVNLAVNNLLSR). At Ser-321 the chain carries Phosphoserine. Residues 322–341 (FDNERGSTSKEGESNPDKKN) show a composition bias toward basic and acidic residues. The disordered stretch occupies residues 322–347 (FDNERGSTSKEGESNPDKKNTPVQSP). Residues Ser-346 and Ser-572 each carry the phosphoserine modification. Over residues 577-598 (KSMEKASKTLETKPESKQEPVK) the composition is skewed to basic and acidic residues. Residues 577–642 (KSMEKASKTL…APREEEKVNE (66 aa)) form a disordered region. Ser-606 carries the phosphoserine modification. Low complexity predominate over residues 608–622 (ASTCSDASSIASSAS). Phosphothreonine is present on Thr-631. Ser-802, Ser-922, and Ser-1012 each carry phosphoserine. 2 disordered regions span residues 993 to 1029 (AGLG…SMDP) and 1046 to 1069 (TAAT…EPSV). The span at 1011 to 1027 (VSPPIAPPSWVPDPPSM) shows a compositional bias: pro residues. Polar residues predominate over residues 1046-1067 (TAATGSGQGPSTSTIPGPSTEP). Thr-1109 and Thr-1129 each carry phosphothreonine. The UBR-type zinc finger occupies 1171–1239 (DTCSFTWTGA…EKCKCKTLIA (69 aa)). 5 positions are modified to phosphoserine: Ser-1221, Ser-1302, Ser-1349, Ser-1369, and Ser-1475. The disordered stretch occupies residues 1293-1312 (REDRNRKTASPEDSDMPDHD). The segment at 1509-1734 (SVEPLPPRPS…PSSTSTPAAS (226 aa)) is disordered. The span at 1518 to 1531 (SSDQASSSSQSQSS) shows a compositional bias: low complexity. Residues 1532 to 1547 (YIIRNPQQRRISQSQP) show a composition bias toward polar residues. Ser-1543 bears the Phosphoserine mark. 2 stretches are compositionally biased toward acidic residues: residues 1553–1568 (EEQD…EVEV) and 1599–1608 (HDEDGSDMEL). Positions 1623-1632 (NHSNQDNASG) are enriched in polar residues. Composition is skewed to low complexity over residues 1635–1651 (SVVT…ASSV), 1662–1675 (SNDS…SSQS), and 1720–1734 (AAST…PAAS). Thr-1730 carries the phosphothreonine modification. The residue at position 1735 (Ser-1735) is a Phosphoserine. A Phosphotyrosine modification is found at Tyr-1740. The residue at position 1774 (Ser-1774) is a Phosphoserine. The disordered stretch occupies residues 1853-1884 (LASAGDPGHPNHPLHASQNSARRERMTAREEA). Over residues 1873-1884 (ARRERMTAREEA) the composition is skewed to basic and acidic residues. Thr-1963 bears the Phosphothreonine mark. Residues 1978 to 2015 (GIDNEDSEHENDDDTSQSATLNDKDDDSLPAETGQNHP) form a disordered region. Residues 1979–1992 (IDNEDSEHENDDDT) are compositionally biased toward acidic residues. Phosphoserine occurs at positions 1984, 2020, and 2022. A Phosphothreonine modification is found at Thr-2024. A Phosphoserine modification is found at Ser-2070. The tract at residues 2111 to 2137 (RQKKEGEEQSLLAEEADSSKPGPSAPD) is disordered. Phosphothreonine is present on Thr-2207. Phosphoserine is present on residues Ser-2235 and Ser-2283. Positions 2317–2387 (HTSLMQRLRN…SDDPDPLPAH (71 aa)) are disordered. 2 stretches are compositionally biased toward basic and acidic residues: residues 2326-2342 (NRGE…EMRR) and 2350-2362 (SRRD…RRQL). The PABC domain occupies 2371 to 2448 (PASEGNPSDD…AMELIIAHGR (78 aa)). An HECT domain is found at 2455 to 2792 (ILDLGLLDSS…AIKTKNFGFV (338 aa)). Residues Ser-2463, Ser-2477, and Ser-2479 each carry the phosphoserine modification. Positions 2467–2494 (VQENRKRHGSSRSVVDMDLEDTDDGDDN) are disordered. Positions 2483–2493 (MDLEDTDDGDD) are enriched in acidic residues. The active-site Glycyl thioester intermediate is the Cys-2761.

This sequence belongs to the UBR5 family. Homotetramer; composed of a dimer of dimers. Associates with CDK9 and TFIIS/TCEA1 and forms a transcription regulatory complex made of CDK9, RNAP II, UBR5 and TFIIS/TCEA1 that can stimulate target gene transcription (e.g. gamma fibrinogen/FGG) by recruiting their promoters. Associates with the E3 ligase complex containing DYRK2, EDD/UBR5, DDB1 and DCAF1 proteins (EDVP complex). Binds TOPBP1. Interacts with PIH1D1. Interacts with CIB1.

Its subcellular location is the nucleus. It localises to the cytoplasm. It catalyses the reaction S-ubiquitinyl-[E2 ubiquitin-conjugating enzyme]-L-cysteine + [acceptor protein]-L-lysine = [E2 ubiquitin-conjugating enzyme]-L-cysteine + N(6)-ubiquitinyl-[acceptor protein]-L-lysine.. Its pathway is protein modification; protein ubiquitination. In terms of biological role, E3 ubiquitin-protein ligase involved in different protein quality control pathways in the cytoplasm and nucleus. Mainly acts as a ubiquitin chain elongator that extends pre-ubiquitinated substrates. Component of the N-end rule pathway: ubiquitinates proteins bearing specific N-terminal residues that are destabilizing according to the N-end rule, leading to their degradation. Recognizes type-1 N-degrons, containing positively charged amino acids (Arg, Lys and His). Together with UBR4, part of a cytoplasm protein quality control pathway that prevents protein aggregation by catalyzing assembly of heterotypic 'Lys-11'-/'Lys-48'-linked branched ubiquitin chains on aggregated proteins, leading to substrate recognition by the segregase p97/VCP and degradation by the proteasome: UBR5 is probably branching multiple 'Lys-48'-linked chains of substrates initially modified with mixed conjugates by UBR4. Together with ITCH, catalyzes 'Lys-48'-/'Lys-63'-branched ubiquitination of TXNIP, leading to its degradation: UBR5 mediates branching of 'Lys-48'-linked chains of substrates initially modified with 'Lys-63'-linked conjugates by ITCH. Catalytic component of a nuclear protein quality control pathway that mediates ubiquitination and degradation of unpaired transcription factors (i.e. transcription factors that are not assembled into functional multiprotein complexes): specifically recognizes and binds degrons that are not accessible when transcription regulators are associated with their coactivators. Ubiquitinates various unpaired transcription regulator (MYC, SUPT4H1, SUPT5H, CDC20 and MCRS1), as well as ligand-bound nuclear receptors (ESR1, NR1H3, NR3C1, PGR, RARA, RXRA AND VDR) that are not associated with their nuclear receptor coactivators (NCOAs). Involved in maturation and/or transcriptional regulation of mRNA by mediating polyubiquitination and activation of CDK9. Also acts as a regulator of DNA damage response by acting as a suppressor of RNF168, an E3 ubiquitin-protein ligase that promotes accumulation of 'Lys-63'-linked histone H2A and H2AX at DNA damage sites, thereby acting as a guard against excessive spreading of ubiquitinated chromatin at damaged chromosomes. Regulates DNA topoisomerase II binding protein (TopBP1) in the DNA damage response. Ubiquitinates acetylated PCK1. Acts as a positive regulator of the canonical Wnt signaling pathway by mediating (1) ubiquitination and stabilization of CTNNB1, and (2) 'Lys-48'-linked ubiquitination and degradation of TLE3. Promotes disassembly of the mitotic checkpoint complex (MCC) from the APC/C complex by catalyzing ubiquitination of BUB1B, BUB3 and CDC20. Plays an essential role in extraembryonic development. Required for the maintenance of skeletal tissue homeostasis by acting as an inhibitor of hedgehog (HH) signaling. This is E3 ubiquitin-protein ligase UBR5 from Mus musculus (Mouse).